The chain runs to 185 residues: MIEETLLEAGDKMDKAVEVAKEDFASIRTGRATPGLYNRVLVDYYGSPTPLQQLASFAVPDARTILITPFDKTALRDIERALSDSEVGANPSNDGNVIRITIPELTKERRKEYVKIVKAKGEDAKVSIRNIRRKAKETLDKLVKDGEAGEDEGARGEKELDALTKAHVDGIDDLLKRKEAELLEV.

It belongs to the RRF family.

The protein localises to the cytoplasm. In terms of biological role, responsible for the release of ribosomes from messenger RNA at the termination of protein biosynthesis. May increase the efficiency of translation by recycling ribosomes from one round of translation to another. The polypeptide is Ribosome-recycling factor (Arthrobacter sp. (strain FB24)).